We begin with the raw amino-acid sequence, 362 residues long: MGNTFGSLFRITTFGESHGGGVGVIIDGCPPRLEISPEEIQVDLDRRRPGQSKITTPRKEADQCEILSGVFEGKTLGTPIAILVRNKDARSQDYNEMAVKYRPSHADATYEAKYGIRNWQGGGRSSARETIGRVAAGAIAKKILAQFNGVEIVAYVKSIQDIEATVDSNTVTLEQVESNIVRCPDEECAEKMIERIDQVLRQKDSIGGVVECAIRNAPKGLGEPVFDKLEADLAKAMMSLPATKGFEFGSGFAGTLLTGSQHNDEYYLDEAGEWRTRTNRSGGVQGGISNGEPIIMRIAFKPTATIGQEQKTVSNIGEETTLAAKGRHDPCVLPRAVPMVEAMAALVLCDHLLRFQAQCKTL.

Arg47 provides a ligand contact to NADP(+). Residues 124 to 126 (RSS), Gly286, 301 to 305 (KPTAT), and Arg327 contribute to the FMN site.

This sequence belongs to the chorismate synthase family. In terms of assembly, homotetramer. Requires FMNH2 as cofactor.

It catalyses the reaction 5-O-(1-carboxyvinyl)-3-phosphoshikimate = chorismate + phosphate. Its pathway is metabolic intermediate biosynthesis; chorismate biosynthesis; chorismate from D-erythrose 4-phosphate and phosphoenolpyruvate: step 7/7. Catalyzes the anti-1,4-elimination of the C-3 phosphate and the C-6 proR hydrogen from 5-enolpyruvylshikimate-3-phosphate (EPSP) to yield chorismate, which is the branch point compound that serves as the starting substrate for the three terminal pathways of aromatic amino acid biosynthesis. This reaction introduces a second double bond into the aromatic ring system. This is Chorismate synthase from Synechocystis sp. (strain ATCC 27184 / PCC 6803 / Kazusa).